Reading from the N-terminus, the 1072-residue chain is DNA-directed RNA polymerase subunit beta (1072 aa).

This sequence belongs to the RNA polymerase beta chain family. In plastids the minimal PEP RNA polymerase catalytic core is composed of four subunits: alpha, beta, beta', and beta''. When a (nuclear-encoded) sigma factor is associated with the core the holoenzyme is formed, which can initiate transcription.

It localises to the plastid. The protein localises to the chloroplast. It carries out the reaction RNA(n) + a ribonucleoside 5'-triphosphate = RNA(n+1) + diphosphate. Its function is as follows. DNA-dependent RNA polymerase catalyzes the transcription of DNA into RNA using the four ribonucleoside triphosphates as substrates. The sequence is that of DNA-directed RNA polymerase subunit beta from Lepidium virginicum (Virginia pepperweed).